An 837-amino-acid chain; its full sequence is Vacuolar membrane protease (837 aa).

Residues 1-36 (MSEEEVHDTSSEASEVFTNQPNAFVRGVRSIFGYRK) are Cytoplasmic-facing. Residues 37 to 57 (TSLTLFVILTIVVTAGLSFYD) form a helical membrane-spanning segment. The Vacuolar segment spans residues 58-355 (NSLELTIELP…FATPISALAR (298 aa)). An N-linked (GlcNAc...) asparagine glycan is attached at N143. The Zn(2+) site is built by H157 and D169. The active-site Proton acceptor is the E201. E202, E227, and H299 together coordinate Zn(2+). A helical transmembrane segment spans residues 356–376 (VNLVLLVLFPVVSTPLLFVIV). Topologically, residues 377–384 (KYKKWKLR) are cytoplasmic. Residues 385–405 (VTNFLGVPLAMGLAVAVGQVG) traverse the membrane as a helical segment. The Vacuolar portion of the chain corresponds to 406 to 415 (NPMLVSSHPM). Residues 416 to 436 (MVVATTTSIVVLVYYVVLNGV) form a helical membrane-spanning segment. Topologically, residues 437-446 (DWVNTSSDQK) are cytoplasmic. Residues 447-467 (LVTMIEVSFVYWVVLVYVTWS) form a helical membrane-spanning segment. Topologically, residues 468–474 (GGDHTGE) are vacuolar. A helical membrane pass occupies residues 475 to 495 (FGVTVLFFVQASTSLLGLIGW). Residues 496-539 (TFTRVRGGDEPLLSGEEERYGTEDERDTEKPLVEHNYDWSLQYL) are Cytoplasmic-facing. A helical transmembrane segment spans residues 540-560 (LIVPVSSLVVYNSGWLVLEGV). N561 carries an N-linked (GlcNAc...) asparagine glycan. Topologically, residues 561-572 (NKTVQESLASEH) are vacuolar. Residues 573–593 (LIYWIVVVFSQFLVLPVVPFI) traverse the membrane as a helical segment. Over 594-598 (TKFNR) the chain is Cytoplasmic. The helical transmembrane segment at 599-619 (YIVLGLSVVAVVGVLMSMAVH) threads the bilayer. Residues 620–837 (PFNQGSPMKL…LVGVVKHVDV (218 aa)) lie on the Vacuolar side of the membrane. An N-linked (GlcNAc...) asparagine glycan is attached at N689.

It belongs to the peptidase M28 family. It depends on Zn(2+) as a cofactor.

It localises to the vacuole membrane. Functionally, may be involved in vacuolar sorting and osmoregulation. This is Vacuolar membrane protease from Candida albicans (strain WO-1) (Yeast).